The primary structure comprises 453 residues: Tubulin alpha-1/2/3 chain (453 aa).

Glutamine 11 is a GTP binding site. Residue lysine 40 is modified to N6-acetyllysine. Residues glutamate 71, serine 140, glycine 144, threonine 145, threonine 179, asparagine 206, and asparagine 228 each contribute to the GTP site. Glutamate 71 provides a ligand contact to Mg(2+). The active site involves glutamate 254. Positions 429–453 (EKDYEEVGTESQEGDGEEGEDGGDQ) are disordered. Acidic residues predominate over residues 431–453 (DYEEVGTESQEGDGEEGEDGGDQ).

It belongs to the tubulin family. Dimer of alpha and beta chains. A typical microtubule is a hollow water-filled tube with an outer diameter of 25 nm and an inner diameter of 15 nM. Alpha-beta heterodimers associate head-to-tail to form protofilaments running lengthwise along the microtubule wall with the beta-tubulin subunit facing the microtubule plus end conferring a structural polarity. Microtubules usually have 13 protofilaments but different protofilament numbers can be found in some organisms and specialized cells. Mg(2+) serves as cofactor. In terms of processing, acetylation of alpha chains at Lys-40 stabilizes microtubules and affects affinity and processivity of microtubule motors. This modification has a role in multiple cellular functions, ranging from cell motility, cell cycle progression or cell differentiation to intracellular trafficking and signaling.

Its subcellular location is the cytoplasm. The protein localises to the cytoskeleton. The enzyme catalyses GTP + H2O = GDP + phosphate + H(+). Its function is as follows. Tubulin is the major constituent of microtubules, a cylinder consisting of laterally associated linear protofilaments composed of alpha- and beta-tubulin heterodimers. Microtubules grow by the addition of GTP-tubulin dimers to the microtubule end, where a stabilizing cap forms. Below the cap, tubulin dimers are in GDP-bound state, owing to GTPase activity of alpha-tubulin. The sequence is that of Tubulin alpha-1/2/3 chain (TBA1) from Naegleria gruberi (Amoeba).